Reading from the N-terminus, the 411-residue chain is Corticotropin-releasing factor receptor 2 (411 aa).

Residues 1–19 (MDAALLLSLLEANCSLALA) constitute a signal peptide (not cleaved). The Extracellular portion of the chain corresponds to 1-108 (MDAALLLSLL…EPILDDKQRK (108 aa)). Asn13, Asn41, Asn74, Asn86, and Asn94 each carry an N-linked (GlcNAc...) asparagine glycan. 3 disulfides stabilise this stretch: Cys14–Cys50, Cys40–Cys83, and Cys64–Cys98. A helical transmembrane segment spans residues 109–139 (YDLHYRIALIVNYLGHCVSVVALVAAFLLFL). Residues 140–146 (VLRSIRC) lie on the Cytoplasmic side of the membrane. Residues 147-171 (LRNVIHWNLITTFILRNIAWFLLQL) form a helical membrane-spanning segment. Over 172–185 (IDHEVHEGNEVWCR) the chain is Extracellular. Cys184 and Cys254 form a disulfide bridge. Residues 186–214 (CITTIFNYFVVTNFFWMFVEGCYLHTAIV) form a helical membrane-spanning segment. Residues 215–221 (MTYSTEH) lie on the Cytoplasmic side of the membrane. The helical transmembrane segment at 222-249 (LRKWLFLFIGWCIPCPIIIAWAVGKLYY) threads the bilayer. The Extracellular segment spans residues 250-265 (ENEQCWFGKEAGDLVD). Residues 266 to 291 (YIYQGPVMLVLLINFVFLFNIVRILM) traverse the membrane as a helical segment. The Cytoplasmic segment spans residues 292-302 (TKLRASTTSET). Residues 303-327 (IQYRKAVKATLVLLPLLGITYMLFF) form a helical membrane-spanning segment. At 328 to 334 (VNPGEDD) the chain is on the extracellular side. A helical membrane pass occupies residues 335–364 (LSQIVFIYFNSFLQSFQGFFVSVFYCFFNG). The Cytoplasmic segment spans residues 365–411 (EVRAALRKRWHRWQDHHALRVPVARAMSIPTSPTRISFHSIKQTAAV).

This sequence belongs to the G-protein coupled receptor 2 family. In terms of assembly, monomer. Interacts with CRF, UCN, UCN2 and UCN3. In terms of processing, a N-glycosylation site within the signal peptide impedes its proper cleavage and function. Highly expressed in the heart. Also expressed in lungs, skeletal muscle, gastrointestinal tract, epididymis, and brain.

The protein localises to the cell membrane. Its function is as follows. G-protein coupled receptor for CRH (corticotropin-releasing factor), UCN (urocortin), UCN2 and UCN3. Has high affinity for UCN. Ligand binding causes a conformation change that triggers signaling via guanine nucleotide-binding proteins (G proteins) and down-stream effectors, such as adenylate cyclase. Promotes the activation of adenylate cyclase, leading to increased intracellular cAMP levels. This is Corticotropin-releasing factor receptor 2 (Crhr2) from Mus musculus (Mouse).